The following is a 424-amino-acid chain: Trigger factor (424 aa).

Residues 163 to 248 (GDTVVLDFEG…IHEIKAKELP (86 aa)) enclose the PPIase FKBP-type domain.

It belongs to the FKBP-type PPIase family. Tig subfamily.

The protein localises to the cytoplasm. It carries out the reaction [protein]-peptidylproline (omega=180) = [protein]-peptidylproline (omega=0). Its function is as follows. Involved in protein export. Acts as a chaperone by maintaining the newly synthesized protein in an open conformation. Functions as a peptidyl-prolyl cis-trans isomerase. The polypeptide is Trigger factor (Bacillus pumilus (strain SAFR-032)).